We begin with the raw amino-acid sequence, 209 residues long: Yop proteins translocation protein K (209 aa).

Functionally, belongs to an operon involved in the translocation of Yop proteins across the bacterial membranes or in the specific control of this function. This Yersinia enterocolitica protein is Yop proteins translocation protein K (yscK).